The following is an 857-amino-acid chain: Protein app1 (857 aa).

The ADF-H domain maps to 6-133; sequence DTSTHGAEIR…NMDDIIRRVA (128 aa). Disordered stretches follow at residues 167-562, 585-622, and 693-723; these read AKVA…VPQR, EVPS…VPQR, and QLNE…TEHT. Over residues 193 to 204 the composition is skewed to basic and acidic residues; sequence KDSKDNSWDDSS. Low complexity predominate over residues 205–217; sequence KQSNTQTANTTSN. A compositionally biased stretch (basic and acidic residues) spans 229 to 240; it reads AGRKEKSQENKP. Composition is skewed to polar residues over residues 276–295, 371–385, 399–409, 443–452, and 498–511; these read SIST…SHAP, PPAS…SPST, KQVSSNETSAQ, KISSFNSKAG, and SSAS…SVIT. A compositionally biased stretch (low complexity) spans 522–561; it reads VVPEAPSVHQPPAAPVAPEVPSAPQRPAAPVVPEAPSVPQ. 2 stretches are compositionally biased toward pro residues: residues 587–596 and 602–611; these read PSVPQPPVAP. Positions 612-622 are enriched in low complexity; the sequence is VAPEVPSVPQR. SH3 domains lie at 725–785 and 800–857; these read PTKT…ITGP and GPGK…VEEI.

This Schizosaccharomyces pombe (strain 972 / ATCC 24843) (Fission yeast) protein is Protein app1 (app1).